The chain runs to 227 residues: 7-cyano-7-deazaguanine synthase (227 aa).

9–19 (LSGGLDSATVL) is an ATP binding site. Zn(2+) contacts are provided by Cys189, Cys199, Cys202, and Cys205.

It belongs to the QueC family. The cofactor is Zn(2+).

The catalysed reaction is 7-carboxy-7-deazaguanine + NH4(+) + ATP = 7-cyano-7-deazaguanine + ADP + phosphate + H2O + H(+). Its pathway is purine metabolism; 7-cyano-7-deazaguanine biosynthesis. Catalyzes the ATP-dependent conversion of 7-carboxy-7-deazaguanine (CDG) to 7-cyano-7-deazaguanine (preQ(0)). The polypeptide is 7-cyano-7-deazaguanine synthase (Cupriavidus taiwanensis (strain DSM 17343 / BCRC 17206 / CCUG 44338 / CIP 107171 / LMG 19424 / R1) (Ralstonia taiwanensis (strain LMG 19424))).